Reading from the N-terminus, the 408-residue chain is Gustatory receptor 10a (408 aa).

Over 1 to 20 (MTSPDERKSFWERHEFKFYR) the chain is Cytoplasmic. A helical membrane pass occupies residues 21–38 (YGHVYALIYGQVVIDYVP). The Extracellular segment spans residues 39 to 48 (QRALKRGVKV). Residues 49–69 (LLIAYGHLFSMLLIVVLPGYF) form a helical membrane-spanning segment. At 70-86 (CYHFRTLTDTLDRRLQL) the chain is on the cytoplasmic side. Residues 87-107 (LFYVSFTNTAIKYATVIVTYV) traverse the membrane as a helical segment. Residues 108-144 (ANTVHFEAINQRCTMQRTHLEFEFKNAPQEPKRPFEF) lie on the Extracellular side of the membrane. A helical membrane pass occupies residues 145 to 165 (FMYFKFCLINLMMMIQVCGIF). Residues 166-270 (AQYGEVGKGS…RESFRMHQFQ (105 aa)) are Cytoplasmic-facing. The chain crosses the membrane as a helical span at residues 271–291 (LIGLMLSTLINNLTNFYTLFH). Residues 292–304 (MLAKQSLEEVSYP) are Extracellular-facing. The chain crosses the membrane as a helical span at residues 305-325 (VVVGSVYATGFYIDTYIVALI). Over 326-381 (NEHIKLELEAVALTMRRFAEPREMDERLTREIEHLSLELLNYQPPMLCGLLHLDRR) the chain is Cytoplasmic. Residues 382 to 402 (LVYLIAVTAFSYFITLVQFDL) form a helical membrane-spanning segment. Residues 403–408 (YLRKKS) are Extracellular-facing.

The protein belongs to the insect chemoreceptor superfamily. Gustatory receptor (GR) family. Gr10a subfamily. As to expression, expressed in the medial aspect of the third antennal segment, and in neurons of the terminal external chemosensory organ of larvae.

It is found in the cell membrane. Probable gustatory receptor which mediates acceptance or avoidance behavior, depending on its substrates. The protein is Gustatory receptor 10a (Gr10a) of Drosophila melanogaster (Fruit fly).